The primary structure comprises 393 residues: Cysteine protease ATG4B (393 aa).

An N-acetylmethionine modification is found at methionine 1. Serine 34 bears the Phosphoserine mark. Cysteine 74 (nucleophile) is an active-site residue. Cysteine 189 is modified (S-nitrosocysteine). Active-site residues include aspartate 278 and histidine 280. An S-nitrosocysteine mark is found at cysteine 292 and cysteine 301. Cysteine 292 and cysteine 361 are oxidised to a cystine. 2 positions are modified to phosphoserine: serine 316 and serine 383. Positions 388–391 (FEIL) match the LIR motif. Position 392 is a phosphoserine (serine 392).

Belongs to the peptidase C54 family. Interacts with PFKP; promoting phosphorylation of ATG4B at Ser-34. Interacts with GBP7. In terms of processing, phosphorylation at Ser-383 and Ser-392 promotes autophagy by increasing protein delipidation activity without affecting proteolytic activation of ATG8 proteins. Phosphorylation at Ser-316 by ULK1 inhibits autophagy by decreasing both proteolytic activation and delipidation activities. Phosphorylation at Ser-316 is dephosphorylated by protein phosphatase 2A (PP2A). Phosphorylation at Ser-34 by AKT2 promotes its hydrolase activity, leading to increased proteolytic activation and delipidation of ATG8 family proteins. Phosphorylation at Ser-34 by AKT1 promotes mitochondrial localization and inhibition of the F1F0-ATP synthase activity, leading to elevation of mitochondrial reactive oxygen species (ROS). Ubiquitinated by RNF5, leading to its degradation by the proteasome. Post-translationally, S-nitrosylation in response to high glucose decreases both proteolytic activation and delipidation activities. In terms of processing, O-glycosylated by OGT, leading to increase protease activity, thereby promoting the proteolytic activation of ATG8 family proteins. Forms reversible intrachain disulfide bonds in response to oxidative stress. Forms interchain disulfide bonds, leading to formation of homooligomers in response to oxidation.

The protein resides in the cytoplasm. It is found in the cytosol. The protein localises to the cytoplasmic vesicle. It localises to the autophagosome. Its subcellular location is the endoplasmic reticulum. The protein resides in the mitochondrion. The catalysed reaction is [protein]-C-terminal L-amino acid-glycyl-phosphatidylethanolamide + H2O = [protein]-C-terminal L-amino acid-glycine + a 1,2-diacyl-sn-glycero-3-phosphoethanolamine. It catalyses the reaction [protein]-C-terminal L-amino acid-glycyl-phosphatidylserine + H2O = [protein]-C-terminal L-amino acid-glycine + a 1,2-diacyl-sn-glycero-3-phospho-L-serine. With respect to regulation, inhibited by N-ethylmaleimide. Redox-regulated during autophagy since reducing conditions activate ATG4A whereas an oxidizing environment such as the presence of H(2)O(2) inhibits its activity. The cysteine protease activity compounds is inhibited by styrylquinoline compounds 4-28 and LV-320. Functionally, cysteine protease that plays a key role in autophagy by mediating both proteolytic activation and delipidation of ATG8 family proteins. Required for canonical autophagy (macroautophagy), non-canonical autophagy as well as for mitophagy. The protease activity is required for proteolytic activation of ATG8 family proteins: cleaves the C-terminal amino acid of ATG8 proteins MAP1LC3A, MAP1LC3B, MAP1LC3C, GABARAPL1, GABARAPL2 and GABARAP, to reveal a C-terminal glycine. Exposure of the glycine at the C-terminus is essential for ATG8 proteins conjugation to phosphatidylethanolamine (PE) and insertion to membranes, which is necessary for autophagy. Protease activity is also required to counteract formation of high-molecular weight conjugates of ATG8 proteins (ATG8ylation): acts as a deubiquitinating-like enzyme that removes ATG8 conjugated to other proteins, such as ATG3. In addition to the protease activity, also mediates delipidation of ATG8 family proteins. Catalyzes delipidation of PE-conjugated forms of ATG8 proteins during macroautophagy. Also involved in non-canonical autophagy, a parallel pathway involving conjugation of ATG8 proteins to single membranes at endolysosomal compartments, by catalyzing delipidation of ATG8 proteins conjugated to phosphatidylserine (PS). Compared to other members of the family (ATG4A, ATG4C or ATG4C), constitutes the major protein for proteolytic activation of ATG8 proteins, while it displays weaker delipidation activity than other ATG4 paralogs. Involved in phagophore growth during mitophagy independently of its protease activity and of ATG8 proteins: acts by regulating ATG9A trafficking to mitochondria and promoting phagophore-endoplasmic reticulum contacts during the lipid transfer phase of mitophagy. The chain is Cysteine protease ATG4B from Rattus norvegicus (Rat).